Reading from the N-terminus, the 297-residue chain is Acetylglutamate kinase (297 aa).

Substrate is bound by residues 68–69 (GG), R90, and N189.

It belongs to the acetylglutamate kinase family. ArgB subfamily.

The protein localises to the cytoplasm. The enzyme catalyses N-acetyl-L-glutamate + ATP = N-acetyl-L-glutamyl 5-phosphate + ADP. It participates in amino-acid biosynthesis; L-arginine biosynthesis; N(2)-acetyl-L-ornithine from L-glutamate: step 2/4. Its function is as follows. Catalyzes the ATP-dependent phosphorylation of N-acetyl-L-glutamate. The polypeptide is Acetylglutamate kinase (Akkermansia muciniphila (strain ATCC BAA-835 / DSM 22959 / JCM 33894 / BCRC 81048 / CCUG 64013 / CIP 107961 / Muc)).